We begin with the raw amino-acid sequence, 308 residues long: 4-hydroxy-tetrahydrodipicolinate synthase (308 aa).

Residue Thr-53 coordinates pyruvate. Tyr-141 functions as the Proton donor/acceptor in the catalytic mechanism. The Schiff-base intermediate with substrate role is filled by Lys-169. Residue Val-209 coordinates pyruvate.

This sequence belongs to the DapA family. Homotetramer; dimer of dimers.

It localises to the cytoplasm. The enzyme catalyses L-aspartate 4-semialdehyde + pyruvate = (2S,4S)-4-hydroxy-2,3,4,5-tetrahydrodipicolinate + H2O + H(+). It functions in the pathway amino-acid biosynthesis; L-lysine biosynthesis via DAP pathway; (S)-tetrahydrodipicolinate from L-aspartate: step 3/4. Catalyzes the condensation of (S)-aspartate-beta-semialdehyde [(S)-ASA] and pyruvate to 4-hydroxy-tetrahydrodipicolinate (HTPA). The protein is 4-hydroxy-tetrahydrodipicolinate synthase of Acidothermus cellulolyticus (strain ATCC 43068 / DSM 8971 / 11B).